The chain runs to 1030 residues: Importin beta-like SAD2 homolog (1030 aa).

Residue Met1 is modified to N-acetylmethionine. An Importin N-terminal domain is found at 25 to 99 (AEQSLNQLQH…RNQILVFVSQ (75 aa)). 2 disordered regions span residues 886–928 (AAKA…GSTL) and 940–964 (SYSDDDDFSDDDFSDDEELESPIDE). Acidic residues-rich tracts occupy residues 890 to 924 (EEEEEDEDGDDDDMDEFQTDDEDEDGDDENPDETD) and 943 to 964 (DDDDFSDDDFSDDEELESPIDE).

The protein belongs to the importin beta family.

It is found in the cytoplasm. The protein localises to the nucleus. Functionally, functions probably in nuclear protein import, either by acting as autonomous nuclear transport receptor or as an adapter-like protein in association with other importin subunits. This Arabidopsis thaliana (Mouse-ear cress) protein is Importin beta-like SAD2 homolog.